Reading from the N-terminus, the 232-residue chain is Nucleolar protein 16 (232 aa).

Basic residues predominate over residues 1–14 (MGRELQKRKKRSSR). 2 disordered regions span residues 1–20 (MGRE…VQTH) and 113–161 (RSDN…QSSR). The segment covering 132-154 (EEPKPKNPTHDIEWHGISDDRQE) has biased composition (basic and acidic residues).

Belongs to the NOP16 family. As to quaternary structure, component of the pre-66S ribosomal particle.

The protein resides in the nucleus. It is found in the nucleolus. In terms of biological role, involved in the biogenesis of the 60S ribosomal subunit. The polypeptide is Nucleolar protein 16 (nop-16) (Neurospora crassa (strain ATCC 24698 / 74-OR23-1A / CBS 708.71 / DSM 1257 / FGSC 987)).